The following is a 488-amino-acid chain: Proline--tRNA ligase (488 aa).

Belongs to the class-II aminoacyl-tRNA synthetase family. ProS type 3 subfamily. In terms of assembly, homodimer.

The protein localises to the cytoplasm. The catalysed reaction is tRNA(Pro) + L-proline + ATP = L-prolyl-tRNA(Pro) + AMP + diphosphate. Its function is as follows. Catalyzes the attachment of proline to tRNA(Pro) in a two-step reaction: proline is first activated by ATP to form Pro-AMP and then transferred to the acceptor end of tRNA(Pro). The sequence is that of Proline--tRNA ligase from Borreliella afzelii (strain PKo) (Borrelia afzelii).